The chain runs to 734 residues: Photosystem I P700 chlorophyll a apoprotein A2 (734 aa).

Transmembrane regions (helical) follow at residues 46–69 (IFAS…FHVA), 135–158 (LYTG…LHLQ), 175–199 (LNHH…HVAI), 273–291 (IAHH…GHMY), 330–353 (IHFQ…QHMY), 369–395 (AALY…IFFI), 417–439 (AIIS…LYVH), and 517–535 (FLVH…LILV). 2 residues coordinate [4Fe-4S] cluster: cysteine 559 and cysteine 568. 2 helical membrane-spanning segments follow: residues 575–596 (AFYL…YWHW) and 643–665 (LSVW…MFLI). Residues histidine 654, methionine 662, and tyrosine 670 each contribute to the chlorophyll a site. Tryptophan 671 is a phylloquinone binding site. A helical transmembrane segment spans residues 707 to 727 (LVGLAHFSVGYIFTYAAFLIA).

This sequence belongs to the PsaA/PsaB family. As to quaternary structure, the PsaA/B heterodimer binds the P700 chlorophyll special pair and subsequent electron acceptors. PSI consists of a core antenna complex that captures photons, and an electron transfer chain that converts photonic excitation into a charge separation. The eukaryotic PSI reaction center is composed of at least 11 subunits. Requires P700 is a chlorophyll a/chlorophyll a' dimer, A0 is one or more chlorophyll a, A1 is one or both phylloquinones and FX is a shared 4Fe-4S iron-sulfur center. as cofactor.

Its subcellular location is the plastid. The protein localises to the chloroplast thylakoid membrane. The enzyme catalyses reduced [plastocyanin] + hnu + oxidized [2Fe-2S]-[ferredoxin] = oxidized [plastocyanin] + reduced [2Fe-2S]-[ferredoxin]. PsaA and PsaB bind P700, the primary electron donor of photosystem I (PSI), as well as the electron acceptors A0, A1 and FX. PSI is a plastocyanin-ferredoxin oxidoreductase, converting photonic excitation into a charge separation, which transfers an electron from the donor P700 chlorophyll pair to the spectroscopically characterized acceptors A0, A1, FX, FA and FB in turn. Oxidized P700 is reduced on the lumenal side of the thylakoid membrane by plastocyanin. This Aethionema grandiflorum (Persian stone-cress) protein is Photosystem I P700 chlorophyll a apoprotein A2.